The chain runs to 227 residues: DNA repair protein RecO (227 aa).

The protein belongs to the RecO family.

Involved in DNA repair and RecF pathway recombination. This is DNA repair protein RecO from Pseudomonas putida (strain GB-1).